A 250-amino-acid chain; its full sequence is 23S rRNA (guanosine-2'-O-)-methyltransferase RlmB (250 aa).

3 residues coordinate S-adenosyl-L-methionine: Gly-198, Ile-218, and Leu-227.

This sequence belongs to the class IV-like SAM-binding methyltransferase superfamily. RNA methyltransferase TrmH family. RlmB subfamily.

The protein resides in the cytoplasm. It catalyses the reaction guanosine(2251) in 23S rRNA + S-adenosyl-L-methionine = 2'-O-methylguanosine(2251) in 23S rRNA + S-adenosyl-L-homocysteine + H(+). Functionally, specifically methylates the ribose of guanosine 2251 in 23S rRNA. The chain is 23S rRNA (guanosine-2'-O-)-methyltransferase RlmB from Coxiella burnetii (strain RSA 493 / Nine Mile phase I).